A 696-amino-acid chain; its full sequence is Elongation factor G (696 aa).

Residues 8–286 (EDVRNIGIAA…AVVAYLPAPT (279 aa)) enclose the tr-type G domain. GTP-binding positions include 17–24 (AHIDAGKT), 81–85 (DTPGH), and 135–138 (NKMD).

The protein belongs to the TRAFAC class translation factor GTPase superfamily. Classic translation factor GTPase family. EF-G/EF-2 subfamily.

It is found in the cytoplasm. Its function is as follows. Catalyzes the GTP-dependent ribosomal translocation step during translation elongation. During this step, the ribosome changes from the pre-translocational (PRE) to the post-translocational (POST) state as the newly formed A-site-bound peptidyl-tRNA and P-site-bound deacylated tRNA move to the P and E sites, respectively. Catalyzes the coordinated movement of the two tRNA molecules, the mRNA and conformational changes in the ribosome. The sequence is that of Elongation factor G from Sulfurimonas denitrificans (strain ATCC 33889 / DSM 1251) (Thiomicrospira denitrificans (strain ATCC 33889 / DSM 1251)).